The following is a 416-amino-acid chain: Histidinol dehydrogenase (416 aa).

The NAD(+) site is built by tyrosine 117, glutamine 178, and asparagine 201. Residues threonine 224, glutamine 246, and histidine 249 each coordinate substrate. Residues glutamine 246 and histidine 249 each contribute to the Zn(2+) site. Catalysis depends on proton acceptor residues glutamate 314 and histidine 315. Positions 315, 348, 402, and 407 each coordinate substrate. Residue aspartate 348 participates in Zn(2+) binding. Histidine 407 is a binding site for Zn(2+).

The protein belongs to the histidinol dehydrogenase family. Zn(2+) serves as cofactor.

It catalyses the reaction L-histidinol + 2 NAD(+) + H2O = L-histidine + 2 NADH + 3 H(+). It functions in the pathway amino-acid biosynthesis; L-histidine biosynthesis; L-histidine from 5-phospho-alpha-D-ribose 1-diphosphate: step 9/9. Catalyzes the sequential NAD-dependent oxidations of L-histidinol to L-histidinaldehyde and then to L-histidine. This Staphylococcus aureus (strain bovine RF122 / ET3-1) protein is Histidinol dehydrogenase.